The chain runs to 492 residues: Cobyric acid synthase (492 aa).

The GATase cobBQ-type domain occupies 253–441 (VLKVIAPVYP…LHGLFDTPQA (189 aa)). The active-site Nucleophile is the Cys334. The active site involves His433.

The protein belongs to the CobB/CobQ family. CobQ subfamily.

Its pathway is cofactor biosynthesis; adenosylcobalamin biosynthesis. In terms of biological role, catalyzes amidations at positions B, D, E, and G on adenosylcobyrinic A,C-diamide. NH(2) groups are provided by glutamine, and one molecule of ATP is hydrogenolyzed for each amidation. This is Cobyric acid synthase from Azoarcus sp. (strain BH72).